The primary structure comprises 171 residues: Small ribosomal subunit protein uS13 (171 aa).

Disordered regions lie at residues 1–22 and 142–171; these read MGKA…AAKK and RHEK…RKKE. A compositionally biased stretch (basic and acidic residues) spans 10–22; that stretch reads KSDKEAAKPAAKK. Positions 142–158 are enriched in basic residues; it reads RHEKGKKVRGQRTRSNG.

It belongs to the universal ribosomal protein uS13 family. Part of the 30S ribosomal subunit. Forms a loose heterodimer with protein S19. Forms two bridges to the 50S subunit in the 70S ribosome.

Located at the top of the head of the 30S subunit, it contacts several helices of the 16S rRNA. In the 70S ribosome it contacts the 23S rRNA (bridge B1a) and protein L5 of the 50S subunit (bridge B1b), connecting the 2 subunits; these bridges are implicated in subunit movement. The chain is Small ribosomal subunit protein uS13 from Thermoplasma volcanium (strain ATCC 51530 / DSM 4299 / JCM 9571 / NBRC 15438 / GSS1).